A 332-amino-acid chain; its full sequence is GTP 3',8-cyclase (332 aa).

Positions 9-220 (GYNRRVDYLR…TQVRERIAER (212 aa)) constitute a Radical SAM core domain. R18 is a GTP binding site. Residues C25 and C29 each contribute to the [4Fe-4S] cluster site. Residue Y31 coordinates S-adenosyl-L-methionine. C32 contributes to the [4Fe-4S] cluster binding site. Position 67 (R67) interacts with GTP. G71 is an S-adenosyl-L-methionine binding site. A GTP-binding site is contributed by T98. Residue S122 coordinates S-adenosyl-L-methionine. K159 lines the GTP pocket. Residue M193 coordinates S-adenosyl-L-methionine. The [4Fe-4S] cluster site is built by C258 and C261. 263–265 (RVR) provides a ligand contact to GTP. [4Fe-4S] cluster is bound at residue C275.

It belongs to the radical SAM superfamily. MoaA family. As to quaternary structure, monomer and homodimer. [4Fe-4S] cluster serves as cofactor.

It carries out the reaction GTP + AH2 + S-adenosyl-L-methionine = (8S)-3',8-cyclo-7,8-dihydroguanosine 5'-triphosphate + 5'-deoxyadenosine + L-methionine + A + H(+). It functions in the pathway cofactor biosynthesis; molybdopterin biosynthesis. In terms of biological role, catalyzes the cyclization of GTP to (8S)-3',8-cyclo-7,8-dihydroguanosine 5'-triphosphate. The sequence is that of GTP 3',8-cyclase from Pseudomonas fluorescens (strain Pf0-1).